The following is a 762-amino-acid chain: Putative BTB/POZ domain-containing protein L272 (762 aa).

The 71-residue stretch at 16–86 (TDITIILKDE…FYGQKIKSHN (71 aa)) folds into the BTB domain. Positions 390–410 (DLDNSNDLNDSNDLDDSDDSN) are enriched in acidic residues. Disordered stretches follow at residues 390-411 (DLDNSNDLNDSNDLDDSDDSND) and 532-556 (ISDNSDNLNNSDNSDDLDNPDNSDN). Positions 532 to 543 (ISDNSDNLNNSD) are enriched in low complexity. A coiled-coil region spans residues 737–762 (FSENYCDELINRLNNALKKIEQKYPN).

It belongs to the mimivirus BTB/WD family.

In Acanthamoeba polyphaga (Amoeba), this protein is Putative BTB/POZ domain-containing protein L272.